Reading from the N-terminus, the 628-residue chain is NUAK family SNF1-like kinase 2 (628 aa).

Met1 carries the post-translational modification N-acetylmethionine. Residues 53-303 (YEFLETLGKG…LEDVASHWWV (251 aa)) enclose the Protein kinase domain. ATP-binding positions include 59-67 (LGKGTYGKV) and Lys81. The Proton acceptor role is filled by Asp175. Thr208 is modified (phosphothreonine; by LKB1). The disordered stretch occupies residues 355–493 (KQHAPGGGST…KEQKPPQASG (139 aa)). Phosphoserine is present on Ser435. Over residues 457-469 (SGYYSSPEPSESG) the composition is skewed to low complexity. Phosphoserine occurs at positions 523, 544, 547, and 573. The interval 531-562 (RPLARASRPSGAVSEDSILSSESFDQLDLPER) is disordered.

It belongs to the protein kinase superfamily. CAMK Ser/Thr protein kinase family. SNF1 subfamily. Requires Mg(2+) as cofactor. Phosphorylated at Thr-208 by STK11/LKB1 in complex with STE20-related adapter-alpha (STRADA) pseudo kinase and CAB39. Autophosphorylation is also possible at Thr-208.

It catalyses the reaction L-seryl-[protein] + ATP = O-phospho-L-seryl-[protein] + ADP + H(+). The catalysed reaction is L-threonyl-[protein] + ATP = O-phospho-L-threonyl-[protein] + ADP + H(+). Activated by phosphorylation on Thr-208. Functionally, stress-activated kinase involved in tolerance to glucose starvation. Induces cell-cell detachment by increasing F-actin conversion to G-actin. Expression is induced by CD95 or TNF-alpha, via NF-kappa-B. Protects cells from CD95-mediated apoptosis and is required for the increased motility and invasiveness of CD95-activated tumor cells. Phosphorylates LATS1 and LATS2. Plays a key role in neural tube closure during embryonic development through LATS2 phosphorylation and regulation of the nuclear localization of YAP1 a critical downstream regulatory target in the Hippo signaling pathway. The chain is NUAK family SNF1-like kinase 2 from Homo sapiens (Human).